Consider the following 398-residue polypeptide: Nocardicin C N-oxygenase (398 aa).

The tract at residues 63–90 (RARAAGREETPRVTPEAAPAGSMLSMDP) is disordered. Heme contacts are provided by histidine 93, arginine 97, arginine 289, histidine 345, and cysteine 347.

This sequence belongs to the cytochrome P450 family. It depends on heme as a cofactor.

It catalyses the reaction nocardicin C + 4 reduced [2Fe-2S]-[ferredoxin] + 2 O2 + 2 H(+) = nocardicin A + 4 oxidized [2Fe-2S]-[ferredoxin] + 3 H2O. It participates in antibiotic biosynthesis. Involved in the biosynthesis of the beta-lactam antibiotic nocardicin A. Catalyzes the conversion of nocardicin C to nocardicin A. Cannot use nocardicin G. The sequence is that of Nocardicin C N-oxygenase from Nocardia uniformis subsp. tsuyamanensis.